The following is a 394-amino-acid chain: Phosphopentomutase (394 aa).

Mn(2+) is bound by residues Asp-10, Asp-282, His-287, Asp-323, His-324, and His-335.

It belongs to the phosphopentomutase family. The cofactor is Mn(2+).

It localises to the cytoplasm. It carries out the reaction 2-deoxy-alpha-D-ribose 1-phosphate = 2-deoxy-D-ribose 5-phosphate. The enzyme catalyses alpha-D-ribose 1-phosphate = D-ribose 5-phosphate. It functions in the pathway carbohydrate degradation; 2-deoxy-D-ribose 1-phosphate degradation; D-glyceraldehyde 3-phosphate and acetaldehyde from 2-deoxy-alpha-D-ribose 1-phosphate: step 1/2. Functionally, isomerase that catalyzes the conversion of deoxy-ribose 1-phosphate (dRib-1-P) and ribose 1-phosphate (Rib-1-P) to deoxy-ribose 5-phosphate (dRib-5-P) and ribose 5-phosphate (Rib-5-P), respectively. The protein is Phosphopentomutase of Dictyoglomus turgidum (strain DSM 6724 / Z-1310).